We begin with the raw amino-acid sequence, 824 residues long: Disintegrin and metalloproteinase domain-containing protein 17 (824 aa).

The signal sequence occupies residues 1–17 (MRQSLLFLTSVVPFVLA). A propeptide spanning residues 18-214 (PRPPDDPGFG…PEELVHRVKR (197 aa)) is cleaved from the precursor. N-linked (GlcNAc...) asparagine glycans are attached at residues N103, N157, and N174. A Cysteine switch motif is present at residues 182-189 (KVCGYLKV). C184 lines the Zn(2+) pocket. Over 215-671 (RADPDPMKNT…NTFGKFLADN (457 aa)) the chain is Extracellular. The Peptidase M12B domain maps to 223 to 474 (NTCKLLVVAD…KAQECFQERS (252 aa)). Intrachain disulfides connect C225-C333, C365-C469, and C423-C453. N264 carries N-linked (GlcNAc...) asparagine glycosylation. H405 serves as a coordination point for Zn(2+). Residue E406 is part of the active site. Residues H409 and H415 each contribute to the Zn(2+) site. Residues N452, N498, N539, and N551 are each glycosylated (N-linked (GlcNAc...) asparagine). One can recognise a Disintegrin domain in the interval 475-563 (NKVCGNSRVD…ECPPPGNAED (89 aa)). Cystine bridges form between C534–C555, C573–C582, C578–C591, and C593–C600. N594 carries N-linked (GlcNAc...) asparagine glycosylation. Residues 603–671 (CCRDLSGRCV…NTFGKFLADN (69 aa)) form a crambin-like region. Residues 672-692 (IVGSVLVFSLIFWIPFSILVH) traverse the membrane as a helical segment. Residues 693 to 824 (CVDKKLDKQY…NRVDSKETEC (132 aa)) lie on the Cytoplasmic side of the membrane. Short sequence motifs (SH3-binding) lie at residues 731-738 (PAPQTPGR) and 741-748 (PAPVIPSA). Positions 732-824 (APQTPGRLQP…NRVDSKETEC (93 aa)) are disordered. T735 carries the phosphothreonine; by MAPK14 modification. The span at 741-752 (PAPVIPSAPAAP) shows a compositional bias: low complexity. Phosphothreonine is present on T761. S767 carries the phosphoserine modification. Composition is skewed to basic and acidic residues over residues 768 to 781 (TDSHMDEDGFEKDP), 791 to 807 (SFEDLTDHPVTRSEKAA), and 815 to 824 (NRVDSKETEC). Phosphoserine is present on residues S791 and S819.

Interacts with MAD2L1, MAPK14 and MUC1. Interacts with iRhom1/RHBDF1 and iRhom2/RHBDF2. Interacts with FRMD8 via its interaction with iRhom1/RHBDF1 and iRhom2/RHBDF2. Interacts with TSPAN8. The cofactor is Zn(2+). In terms of processing, the precursor is cleaved by a furin endopeptidase. Post-translationally, phosphorylated. Stimulation by growth factor or phorbol 12-myristate 13-acetate induces phosphorylation of Ser-819 but decreases phosphorylation of Ser-791. Phosphorylation at Thr-735 by MAPK14 is required for ADAM17-mediated ectodomain shedding. As to expression, ubiquitously expressed. Expressed at highest levels in adult heart, placenta, skeletal muscle, pancreas, spleen, thymus, prostate, testes, ovary and small intestine, and in fetal brain, lung, liver and kidney. Expressed in natural killer cells (at protein level).

It localises to the cell membrane. The enzyme catalyses Narrow endopeptidase specificity. Cleaves Pro-Leu-Ala-Gln-Ala-|-Val-Arg-Ser-Ser-Ser in the membrane-bound, 26-kDa form of tumor necrosis factor alpha (TNFalpha). Similarly cleaves other membrane-anchored, cell-surface proteins to 'shed' the extracellular domains.. Transmembrane metalloprotease which mediates the ectodomain shedding of a myriad of transmembrane proteins including adhesion proteins, growth factor precursors and cytokines important for inflammation and immunity. Cleaves the membrane-bound precursor of TNF-alpha to its mature soluble form. Responsible for the proteolytical release of soluble JAM3 from endothelial cells surface. Responsible for the proteolytic release of several other cell-surface proteins, including p75 TNF-receptor, interleukin 1 receptor type II, p55 TNF-receptor, transforming growth factor-alpha, L-selectin, growth hormone receptor, MUC1 and the amyloid precursor protein. Acts as an activator of Notch pathway by mediating cleavage of Notch, generating the membrane-associated intermediate fragment called Notch extracellular truncation (NEXT). Plays a role in the proteolytic processing of ACE2. Plays a role in hemostasis through shedding of GP1BA, the platelet glycoprotein Ib alpha chain. Mediates the proteolytic cleavage of LAG3, leading to release the secreted form of LAG3. Mediates the proteolytic cleavage of IL6R, leading to the release of secreted form of IL6R. Mediates the proteolytic cleavage and shedding of FCGR3A upon NK cell stimulation, a mechanism that allows for increased NK cell motility and detachment from opsonized target cells. Cleaves TREM2, resulting in shedding of the TREM2 ectodomain. The protein is Disintegrin and metalloproteinase domain-containing protein 17 of Homo sapiens (Human).